A 1225-amino-acid chain; its full sequence is MVREEEKGIPVRVVRCRPLVPKETSEGCQMCLSFVPGEPQVIVGSDKAFTYDYVFDPSVEQEEVFNTAVAPLIRGIFKGYNATVLAYGQTGSGKTYSMGGTYTASQEHDPSMGVIPRVIKLLFKEKEQRQDWEFVLKVSYLEIYNEDILDLLCSSRERSSQISIREDPKEGIKIVGLTERNVASARDTVSCLEQGNNCRTVASTAMNSQSSRSHAIFTICIDQKKKNDKNSSFHSKLHLVDLAGSERQKKTKAEGDRLKEGININRGLLCLGNVISALGEENKKGGFVPYRDSKLTRLLQDSLGGNSHTLMIACVSPADSNLEETLNTLRYADRARKIKNKPIVNVDPQAAELNHLKQQVQQLQVLLLQAHGGTLPVSINSMAPSENLQSLMEKNQSLMEENEKLSRGLSEAAGQTAQMLERIIVTEQENEKMNAKLEQLQQHAVCKLDLQKLLETVEDEELKENVEVIRNLQQVLAQFQSESAAAAEAATEMANAEQDAAGEAETGQVTKRSSDDFTTQHALRQAQMSKELVELNKALALKEALAKKMIQNDSQLEPIQSQYQTNIKDLELEVSNLQKEKEELILALSMAKKDVNQAKLSERRRKRLQELEGQINELKKKLNEQAKLLKLKESTERTVSKLNQEIREMKNQRVQLMRQMKEDAEKFRQWKQQKDKEVIQLKERDRKRQYELLKLERDFQKQASVLRRKTEEAAAANKRLKDALQKQREAADKRKESQNRGMEGVAARVKSWLANEVEVLVSTEEARRHLADLLEDRKILAQELLQLKEKKESGENPPSKLRRRTYSITDLQASEMDLSLSKQIESLETEMELRSAQIADLQQKLLDADNGDRVKQRWDNIATILEAKCALKYLLGELVSSKVQESKLESSLQQSKTNCSDIQKMLIEERNHATEMEAEFQNQLLLQEQQHQQEVLYLLSQFQQKEAPGKGVEDSLSEQEKQMQERLKFQEKELEKMREICEKNQELLQENDVLKQKMLLVQVASGQKLRRDQQVSPESPDSPFDYIPPKPKTRRQTVAKPRAPTPEMNVEELFSDSEESGEEEDAEWVPVKAAKGTKKSATGCFCKGRCGNRQCGCRKQKVGCTAGCSCDSTKCRNRDPGFQDATVCEDQTKDSEGSFKLEDLRDVTAGETFFQPVYSPPTMKVLKDITDQGVFMKKPSTAASLLVRDEESQENQLPFVKKKKRMLSSNTSFFSGCTPIKEEID.

One can recognise a Kinesin motor domain in the interval 9–338 (IPVRVVRCRP…LRYADRARKI (330 aa)). ATP is bound at residue 88–95 (GQTGSGKT). Positions 352 to 1003 (ELNHLKQQVQ…LKQKMLLVQV (652 aa)) form a coiled coil. Disordered regions lie at residues 498–520 (QDAAGEAETGQVTKRSSDDFTTQ), 717–744 (NKRLKDALQKQREAADKRKESQNRGMEG), and 1006–1047 (GQKL…PTPE). The span at 507-520 (GQVTKRSSDDFTTQ) shows a compositional bias: polar residues. Residues 719–738 (RLKDALQKQREAADKRKESQ) show a composition bias toward basic and acidic residues. The segment at 1004 to 1225 (ASGQKLRRDQ…GCTPIKEEID (222 aa)) is globular.

Belongs to the TRAFAC class myosin-kinesin ATPase superfamily. Kinesin family. Chromokinesin subfamily. It depends on [2Fe-2S] cluster as a cofactor. [4Fe-4S] cluster serves as cofactor. Expressed in proliferating cells; neuroepithelium of embryos.

The protein resides in the nucleus. It is found in the chromosome. It localises to the cytoplasm. The protein localises to the cytoskeleton. Its function is as follows. Iron-sulfur (Fe-S) cluster binding motor protein that has a role in chromosome segregation during mitosis. Required for mitotic chromosomal positioning and bipolar spindle stabilization. This chain is Chromosome-associated kinesin KIF4 (KIF4), found in Gallus gallus (Chicken).